The chain runs to 352 residues: 3-isopropylmalate dehydrogenase (352 aa).

71–87 (GAHDSAWNQLPRHLRPE) serves as a coordination point for NAD(+). 4 residues coordinate substrate: Arg-94, Arg-104, Arg-132, and Asp-218. The Mg(2+) site is built by Asp-218, Asp-242, and Asp-246. 275–287 (GSAPDIAGQGVAN) serves as a coordination point for NAD(+).

Belongs to the isocitrate and isopropylmalate dehydrogenases family. LeuB type 1 subfamily. Homodimer. It depends on Mg(2+) as a cofactor. Mn(2+) is required as a cofactor.

It localises to the cytoplasm. It carries out the reaction (2R,3S)-3-isopropylmalate + NAD(+) = 4-methyl-2-oxopentanoate + CO2 + NADH. It participates in amino-acid biosynthesis; L-leucine biosynthesis; L-leucine from 3-methyl-2-oxobutanoate: step 3/4. Catalyzes the oxidation of 3-carboxy-2-hydroxy-4-methylpentanoate (3-isopropylmalate) to 3-carboxy-4-methyl-2-oxopentanoate. The product decarboxylates to 4-methyl-2 oxopentanoate. The polypeptide is 3-isopropylmalate dehydrogenase (Deinococcus radiodurans (strain ATCC 13939 / DSM 20539 / JCM 16871 / CCUG 27074 / LMG 4051 / NBRC 15346 / NCIMB 9279 / VKM B-1422 / R1)).